The following is a 149-amino-acid chain: uncharacterized protein (149 aa).

A compositionally biased stretch (basic and acidic residues) spans 1–11 (MTKESKPDRLR). The disordered stretch occupies residues 1 to 20 (MTKESKPDRLRQMGALNPKP).

This is an uncharacterized protein from Sinorhizobium fredii (strain NBRC 101917 / NGR234).